We begin with the raw amino-acid sequence, 180 residues long: Shikimate kinase (180 aa).

14 to 19 (GAGKSS) contributes to the ATP binding site. S18 provides a ligand contact to Mg(2+). Substrate-binding residues include D36, R60, and G82. R120 contacts ATP. R139 is a substrate binding site.

The protein belongs to the shikimate kinase family. In terms of assembly, monomer. The cofactor is Mg(2+).

Its subcellular location is the cytoplasm. The enzyme catalyses shikimate + ATP = 3-phosphoshikimate + ADP + H(+). Its pathway is metabolic intermediate biosynthesis; chorismate biosynthesis; chorismate from D-erythrose 4-phosphate and phosphoenolpyruvate: step 5/7. Its function is as follows. Catalyzes the specific phosphorylation of the 3-hydroxyl group of shikimic acid using ATP as a cosubstrate. The protein is Shikimate kinase of Xylella fastidiosa (strain M12).